A 230-amino-acid chain; its full sequence is 2,3-bisphosphoglycerate-dependent phosphoglycerate mutase (230 aa).

Residues Arg8–Asn15, Thr21–Gly22, Arg60, Glu87–Tyr90, Lys98, Arg114–Arg115, and Gly183–Asn184 each bind substrate. The active-site Tele-phosphohistidine intermediate is His9. The active-site Proton donor/acceptor is the Glu87.

This sequence belongs to the phosphoglycerate mutase family. BPG-dependent PGAM subfamily.

The enzyme catalyses (2R)-2-phosphoglycerate = (2R)-3-phosphoglycerate. Its pathway is carbohydrate degradation; glycolysis; pyruvate from D-glyceraldehyde 3-phosphate: step 3/5. Its function is as follows. Catalyzes the interconversion of 2-phosphoglycerate and 3-phosphoglycerate. The protein is 2,3-bisphosphoglycerate-dependent phosphoglycerate mutase of Streptococcus pneumoniae (strain ATCC BAA-255 / R6).